The primary structure comprises 437 residues: MTDSEAWPRSAAAFAEAVKLMPGGVNSPVRAFKSVGLTPPFIQRGEGAYLYDIDGHKYIDYVSSWGPLILGHRHPEVVDALEKTLREMGTSFGAPTELENELAREITTAMPAVEMVRLVNSGTEATMSALRLARGYTGREKVVKFAGCYHGHADYFLIQAGSGALTFGIPNSPGVPATVAANTIVAPYNDLAAVEDIFQKAGEEIAAVIVEPVAGNMGCVPPLTGFLAGLRTITKEYGSLLIFDEVMTGFRVAFGGAQALYGIRPDLTCLGKIIGGGLPVGAYGGRREIMERVAPSGPIYQAGTLSGNPLAVSAGLATLKVLKKPGTYERLESLSARLEKGLKEAAAEAGVPVTFNRVGAMFTTFFNPGPVTDYATATASDTRAFAAFFRAMLRQGIYLAPSQFEAAFMSLAHREDDIDCTIAAAREAFKGIAIGDS.

N6-(pyridoxal phosphate)lysine is present on Lys-272.

Belongs to the class-III pyridoxal-phosphate-dependent aminotransferase family. HemL subfamily. Homodimer. Requires pyridoxal 5'-phosphate as cofactor.

It is found in the cytoplasm. It catalyses the reaction (S)-4-amino-5-oxopentanoate = 5-aminolevulinate. It functions in the pathway porphyrin-containing compound metabolism; protoporphyrin-IX biosynthesis; 5-aminolevulinate from L-glutamyl-tRNA(Glu): step 2/2. The protein is Glutamate-1-semialdehyde 2,1-aminomutase of Moorella thermoacetica (strain ATCC 39073 / JCM 9320).